A 134-amino-acid chain; its full sequence is Small ribosomal subunit protein bS16 (134 aa).

The disordered stretch occupies residues 79–134; sequence AGIAKRPSRNNPTKGEPGKKAQERLALAKQAEEEASAKAAEAAAAAAAPAEEAASE. Positions 115–134 are enriched in low complexity; it reads AKAAEAAAAAAAPAEEAASE.

Belongs to the bacterial ribosomal protein bS16 family.

The polypeptide is Small ribosomal subunit protein bS16 (Brucella abortus (strain S19)).